Consider the following 253-residue polypeptide: Adapter protein MecA (253 aa).

It belongs to the MecA family. As to quaternary structure, homodimer.

Enables the recognition and targeting of unfolded and aggregated proteins to the ClpC protease or to other proteins involved in proteolysis. In Streptococcus pyogenes serotype M6 (strain ATCC BAA-946 / MGAS10394), this protein is Adapter protein MecA.